Consider the following 344-residue polypeptide: 4'-phosphopantetheinyl transferase NpgA (344 aa).

It belongs to the P-Pant transferase superfamily.

It carries out the reaction apo-[ACP] + CoA = holo-[ACP] + adenosine 3',5'-bisphosphate + H(+). In terms of biological role, transfers the 4'-phosphopantetheine moiety from coenzyme A to a Ser of an acyl-carrier-protein. The enzyme is able to transfer the cofactor to a broad range of enzymes with acyl- or peptidyl-carrier protein domains. Required for primary biological processes such as growth and asexual/sexual development, and activates target enzymes involved in the synthesis of metabolites such as fatty acids, polyketides and nonribosomal peptides, lysine, siderophore, penicillin, sterigmatocystin, shamixantone, dehydroaustinol, and pigments. This is 4'-phosphopantetheinyl transferase NpgA (npgA) from Emericella nidulans (strain FGSC A4 / ATCC 38163 / CBS 112.46 / NRRL 194 / M139) (Aspergillus nidulans).